Here is a 210-residue protein sequence, read N- to C-terminus: Isochorismatase domain-containing protein 2B (210 aa).

Position 178 is an N6-succinyllysine (Lys-178).

It belongs to the isochorismatase family. In terms of assembly, interacts with CDKN2A. As to expression, ubiquitous. Expressed predominantly in uterus, stomach and urinary tract.

The protein resides in the cytoplasm. The protein localises to the nucleus. The polypeptide is Isochorismatase domain-containing protein 2B (Isoc2b) (Mus musculus (Mouse)).